Reading from the N-terminus, the 119-residue chain is Holo-[acyl-carrier-protein] synthase (119 aa).

Mg(2+) is bound by residues Asp8 and Glu53.

Belongs to the P-Pant transferase superfamily. AcpS family. Mg(2+) is required as a cofactor.

The protein localises to the cytoplasm. The enzyme catalyses apo-[ACP] + CoA = holo-[ACP] + adenosine 3',5'-bisphosphate + H(+). Functionally, transfers the 4'-phosphopantetheine moiety from coenzyme A to a Ser of acyl-carrier-protein. This Petrotoga mobilis (strain DSM 10674 / SJ95) protein is Holo-[acyl-carrier-protein] synthase.